A 448-amino-acid polypeptide reads, in one-letter code: RING finger protein 44 (448 aa).

The RING-type; atypical zinc-finger motif lies at 396 to 437; the sequence is CVVCFSDFESRQLLRVLPCNHEFHAKCVDKWLKTNRTCPICR.

This is RING finger protein 44 (rnf44) from Danio rerio (Zebrafish).